The following is a 501-amino-acid chain: TNF receptor-associated factor 2 (501 aa).

N-acetylalanine is present on A2. At S5 the chain carries Phosphoserine. T7 carries the phosphothreonine modification. Phosphoserine is present on S11. Residue T22 is modified to Phosphothreonine. A Glycyl lysine isopeptide (Lys-Gly) (interchain with G-Cter in ubiquitin) cross-link involves residue K31. The segment at 34–73 adopts an RING-type zinc-finger fold; it reads CSACKNILRRPFQAQCGHRYCSFCLTSILSSGPQNCAACV. T117 bears the Phosphothreonine; by PKC mark. TRAF-type zinc fingers lie at residues 124–180 and 177–233; these read CHEG…VHYE and VHYE…ENLQ. Residues 283-293 are important for interaction with BIRC2 and BIRC3; sequence ENIVCVLNREV. Positions 298 to 348 form a coiled coil; sequence VTAEACSRQHRLDQDKIEALSNKVQQLERSIGLKDLAMADLEQKVSELEVS. A Glycyl lysine isopeptide (Lys-Gly) (interchain with G-Cter in ubiquitin) cross-link involves residue K320. The 146-residue stretch at 351–496 folds into the MATH domain; that stretch reads DGVFIWKISD…DDAIFIKAIV (146 aa).

This sequence belongs to the TNF receptor-associated factor family. A subfamily. Homotrimer. Heterotrimer with TRAF1. Heterotrimer with TRAF3 (via TRAF domain). The domain containing the RING-type and the first TRAF-type zinc finger can also form homodimers (in vitro). Interacts with TNFRSF1B/TNFR2. Interacts with TNFRSF5/CD40. Interacts with TNFRSF4, TNFRSF7/CD27, TNFRSF8/CD30, TNFRSF9/CD137, TNFRSF11A/RANK, TNFRSF13B/TACI, TNFRSF14, TNFRSF16/NGFR, TNFRSF17/BCMA, TNFRSF18/AITR, TNFRSF19/TROY, TNFRSF19L/RELT and EDAR. Stimulation of TNF-alpha receptor TNFRSF1A leads to the formation of two distinct signaling complexes. Plasma membrane-bound complex I is composed of TNFRSF1A, TRADD, RIPK1, TRAF2 and BIRC2/c-IAP1 or BIRC3 which interacts with CHUCK/IKK-alpha, IKBKB/IKK-beta and IKBKG/IKK-gamma promoting cell survival. Subsequently, TRADD, RIPK1 and TRAF2 dissociate from TNFRSF1A and form cytoplasmic complex II with FADD and caspase CASP8 promoting cell apoptosis. Interacts with TRADD. Identified in a complex with TNFRSF1A, RIPK1 and IKBKB/IKK-beta. Interacts with RIPK2. Interacts with BIRC2 and BIRC3 N-terminus; a single BIRC2 or BIRC3 molecule interacts with a heterotrimer formed by TRAF1 and TRAF2, or a TRAF2 homotrimer. Identified in a complex composed of TRAF2, TRAF3, BIRC2 and BIRC3. Interacts with BIRC2; the interaction promotes BIRC2 stability. Interaction with BIRC2 and/or BIRC3 is essential for ubiquitination of IKBKE, degradation of NFKBIA and activation of NF-kappa-B. Within complex I, phosphorylated TRAF2 interacts (via 'Lys-63'-linked polyubiquitin chains) with CHUCK/IKK-alpha, IKBKB/IKK-beta, IKBKG/IKK-gamma TAB2, TAB3 and TAK1 in response to TNF-alpha stimulation. Within complex I, interacts with UXT isoform 1 (via TPQE motif); the interaction prevents the recruitment of FADD and CASP8/caspase 8 to complex I. Forms a complex composed of TNFRSF8/CD30 or TNFRSF1B/TNFR2, and TRAF1, TRAF2 and E3 ligase TRAIP. Within the complex, interacts with TRAIP; the interaction inhibits TRAF2-mediated NF-kappa B activation. Component of a complex composed of TANK and TBK1. Interacts with TRPC4AP. Interacts with MAP3K1/MEKK1, MAP3K5/ASK1 and MAP3K11/MLK3 in response to TNF-alpha stimulation; the interaction leads to JNK activation and interaction with MAP3K5 is inhibited by PRMT1. Component of a complex composed of MAP3K14/NIK BIRC3 and TRAF3; the interaction leads to BIRC2/3-mediated ubiquitination of TRAF3 upon CD40 engagement in a TRAF2-dependent manner. Interacts with MAP3K14/NIK in response to TNF-alpha stimulation; the interaction leads to NF-kappa B activation. Interacts with PEG3; the interaction may promote TRAF2-mediated NF-kappa B activation. Interacts with HIVEP3; the interaction may inhibit TNF-alpha-TRAF2-mediated NF-kappa B and JNK activation. Interacts with TANK/ITRAF; the interaction prevents interaction between TNFRSF1B/TNFR2 and TRAF2. Interacts with deubiquitinating enzyme CYLD; the interaction results in the deubiquitination and inactivation of TRAF2. Interacts with SIAH2; the interaction leads to TRAF2 ubiquitination and degradation. Interacts with E2 conjugating enzyme UBE2N/Ubc13, E3 ligase ITCH and RNF11 in response to TNF-alpha stimulation. Interacts with ubiquitin-editing enzyme TNFAIP3/A20 in response to TNF-alpha stimulation; the interaction promotes TRAF2 dissociation from UBE2N/Ubc13, ITCH, RNF11 and TAX1BP1 and prevents prolonged TRAF-2 ubiquitination. Interacts with TAX1BP1 in response to TNF-alpha stimulation; the interaction promotes TRAF2 dissociation from UBE2N/Ubc13 and TNFAIP3/A20, and prevents prolonged TRAF-2 ubiquitination. Interacts (via C-terminus) with EIF2AK2/PKR (via the kinase catalytic domain). Interacts with deubiquitinating enzyme USP48. Interacts with PTPN2; probably involved in TNF-mediated signaling. Interacts with Toll-like receptor TLR4/3 adapter TICAM1/TRIF; the interaction may promote TICAM1 ubiquitination. Interacts with kinase/endoribonuclease ERN1/IRE1 and DAB2IP in response to ER stress; the interaction requires DAB2IP. Interacts with ERN1/IRE1 and TAOK3 in response to ER stress; the interaction may promote TRAF2 phosphorylation. Interacts (via zinc fingers) with DAB2IP (via C-terminus PER domain) in response to TNF-alpha stimulation. Interacts with CASP8AP2/FLASH. Interacts with NFATC2IP; the interaction may repress IL-4 production in T cells. Interacts with kinase CDK9. Interacts with sphingosine kinase 1 SPHK1. Interacts with kinase TNIK. Interacts with TRAFD1. Interacts with DNA phosphodiesterase TDP2. Interacts with MAVS/IPS1. Interacts with CARD14. Interacts with GPS2. Interacts with XPNPEP3. Interacts with RIPK3. Interacts with RELL2. Interacts with LRRC19. Interacts with GAPDH; promoting TRAF2 ubiquitination. Phosphorylated at several serine residues within the first 128 amino acid residues. Phosphorylated at Thr-117 in response to signaling via TNF and TNFRSF1A. Phosphorylation at Thr-117 is required for 'Lys-63'-linked polyubiquitination, but not for 'Lys-48'-linked polyubiquitination. Phosphorylation at Thr-117 is important for interaction with IKKA and IKKB, activation of IKK and subsequent activation of NF-kappa-B. Post-translationally, undergoes both 'Lys-48'-linked and 'Lys-63'-linked polyubiquitination. Polyubiquitinated via 'Lys-63'-linked ubiquitin in response to TNF signaling; this requires prior phosphorylation at Thr-117. 'Lys-63'-linked polyubiquitination promotes TRAF2-mediated activation of NF-kappa-B. Can be polyubiquitinated at several Lys residues via 'Lys-48'-linked ubiquitin chains in response to TNF signaling, leading to proteasomal degradation. Autoubiquitinated, leading to its subsequent proteasomal degradation. Polyubiquitinated by BIRC2 and SIAH2, leading to its subsequent proteasomal degradation. Not ubiquitinated by BIRC3 or SIAH1. Deubiquitinated by CYLD, a protease that specifically cleaves 'Lys-63'-linked polyubiquitin chains. Ubiquination is inhibited by LRRC19; inhiits proteasomal degradation. Ubiquitinated at Lys-320 by the SCF(FBXL2) complex, leading to its degradation by the proteasome. Ubiquitinated by E3 ubiquitin-protein ligase complex containing FBXO7; leading to repression of NF-kappa-B signaling. In terms of tissue distribution, isoform 1 and isoform 2 are expressed in spleen, adipose tissues, skeletal muscles, thymus, testis, heart, lung, brain. Isoform 2 is very weakly expressed in heart, lung and brain.

The protein localises to the cytoplasm. It carries out the reaction S-ubiquitinyl-[E2 ubiquitin-conjugating enzyme]-L-cysteine + [acceptor protein]-L-lysine = [E2 ubiquitin-conjugating enzyme]-L-cysteine + N(6)-ubiquitinyl-[acceptor protein]-L-lysine.. Its pathway is protein modification; protein ubiquitination. Its activity is regulated as follows. Has very low E3 ubiquitin ligase activity in the absence of sphingosine-1-phosphate. E3 ubiquitin ligase activity is strongly activated by cytoplasmic sphingosine-1-phosphate. E3 ubiquitin-protein ligase that regulates activation of NF-kappa-B and JNK and plays a central role in the regulation of cell survival and apoptosis. Catalyzes 'Lys-63'-linked ubiquitination of target proteins, such as BIRC3, IKBKE, MLST8, RIPK1 and TICAM1. Is an essential constituent of several E3 ubiquitin-protein ligase complexes, where it promotes the ubiquitination of target proteins by bringing them into contact with other E3 ubiquitin ligases. Regulates BIRC2 and BIRC3 protein levels by inhibiting their autoubiquitination and subsequent degradation; this does not depend on the TRAF2 RING-type zinc finger domain. Plays a role in mediating activation of NF-kappa-B by EIF2AK2/PKR. In complex with BIRC2 or BIRC3, promotes ubiquitination of IKBKE. Acts as a regulator of mTORC1 and mTORC2 assembly by mediating 'Lys-63'-linked ubiquitination of MLST8, thereby inhibiting formation of the mTORC2 complex, while facilitating assembly of the mTORC1 complex. Required for normal antibody isotype switching from IgM to IgG. The protein is TNF receptor-associated factor 2 (Traf2) of Mus musculus (Mouse).